The primary structure comprises 118 residues: HTH-type transcriptional regulator CmtR (118 aa).

The region spanning 3 to 97 (TCEMRESALA…ELVQVVLAVD (95 aa)) is the HTH arsR-type domain. Positions 57, 61, and 102 each coordinate Cd(2+).

In terms of assembly, homodimer.

Its function is as follows. Metal-responsive transcriptional repressor for the cmt operon. Binding of cadmium or lead causes the repressor to dissociate from the DNA. This chain is HTH-type transcriptional regulator CmtR (cmtR), found in Mycobacterium bovis (strain ATCC BAA-935 / AF2122/97).